The primary structure comprises 333 residues: DNA-directed RNA polymerase subunit alpha (333 aa).

Positions 1-227 (MRKIKVAPFM…VMNKQLSVFN (227 aa)) are alpha N-terminal domain (alpha-NTD). An alpha C-terminal domain (alpha-CTD) region spans residues 247 to 333 (ELKPFLAAVD…LVKKLEQLKA (87 aa)).

It belongs to the RNA polymerase alpha chain family. In terms of assembly, homodimer. The RNAP catalytic core consists of 2 alpha, 1 beta, 1 beta' and 1 omega subunit. When a sigma factor is associated with the core the holoenzyme is formed, which can initiate transcription.

The enzyme catalyses RNA(n) + a ribonucleoside 5'-triphosphate = RNA(n+1) + diphosphate. DNA-dependent RNA polymerase catalyzes the transcription of DNA into RNA using the four ribonucleoside triphosphates as substrates. The protein is DNA-directed RNA polymerase subunit alpha of Sulfurovum sp. (strain NBC37-1).